The primary structure comprises 344 residues: N-acetyl-gamma-glutamyl-phosphate reductase (344 aa).

The active site involves Cys-150.

The protein belongs to the NAGSA dehydrogenase family. Type 1 subfamily.

The protein localises to the cytoplasm. It catalyses the reaction N-acetyl-L-glutamate 5-semialdehyde + phosphate + NADP(+) = N-acetyl-L-glutamyl 5-phosphate + NADPH + H(+). The protein operates within amino-acid biosynthesis; L-arginine biosynthesis; N(2)-acetyl-L-ornithine from L-glutamate: step 3/4. In terms of biological role, catalyzes the NADPH-dependent reduction of N-acetyl-5-glutamyl phosphate to yield N-acetyl-L-glutamate 5-semialdehyde. The chain is N-acetyl-gamma-glutamyl-phosphate reductase from Pseudomonas syringae pv. syringae (strain B728a).